The following is a 38-amino-acid chain: NAD-reducing hydrogenase HoxS subunit beta (38 aa).

Belongs to the [NiFe]/[NiFeSe] hydrogenase large subunit family. As to quaternary structure, tetramer of an alpha and a gamma subunits (flavin-containing dimer), and a delta and a nickel-containing beta subunits (hydrogenase dimer). FMN is required as a cofactor. Ni(2+) serves as cofactor.

The protein localises to the cytoplasm. It carries out the reaction H2 + NAD(+) = NADH + H(+). The polypeptide is NAD-reducing hydrogenase HoxS subunit beta (hoxH) (Rhodococcus opacus (Nocardia opaca)).